The chain runs to 601 residues: ATP-dependent lipid A-core flippase (601 aa).

4 helical membrane-spanning segments follow: residues valine 26–leucine 46, leucine 82–leucine 102, valine 167–isoleucine 187, and valine 263–valine 283. The ABC transmembrane type-1 domain maps to alanine 30–arginine 321. Residues isoleucine 353–methionine 589 form the ABC transporter domain. An ATP-binding site is contributed by glycine 387–serine 394.

This sequence belongs to the ABC transporter superfamily. Lipid exporter (TC 3.A.1.106) family. In terms of assembly, homodimer.

The protein localises to the cell inner membrane. It catalyses the reaction ATP + H2O + lipid A-core oligosaccharideSide 1 = ADP + phosphate + lipid A-core oligosaccharideSide 2.. Functionally, involved in lipopolysaccharide (LPS) biosynthesis. Translocates lipid A-core from the inner to the outer leaflet of the inner membrane. Transmembrane domains (TMD) form a pore in the inner membrane and the ATP-binding domain (NBD) is responsible for energy generation. This chain is ATP-dependent lipid A-core flippase, found in Aromatoleum aromaticum (strain DSM 19018 / LMG 30748 / EbN1) (Azoarcus sp. (strain EbN1)).